A 328-amino-acid chain; its full sequence is D-cysteine desulfhydrase (328 aa).

N6-(pyridoxal phosphate)lysine is present on Lys51.

Belongs to the ACC deaminase/D-cysteine desulfhydrase family. As to quaternary structure, homodimer. It depends on pyridoxal 5'-phosphate as a cofactor.

It carries out the reaction D-cysteine + H2O = hydrogen sulfide + pyruvate + NH4(+) + H(+). Its function is as follows. Catalyzes the alpha,beta-elimination reaction of D-cysteine and of several D-cysteine derivatives. It could be a defense mechanism against D-cysteine. In Klebsiella pneumoniae (strain 342), this protein is D-cysteine desulfhydrase.